A 106-amino-acid polypeptide reads, in one-letter code: uncharacterized protein (106 aa).

The helical transmembrane segment at 85-101 (AVALVLLCVSHHLTYLP) threads the bilayer.

The protein localises to the membrane. This is an uncharacterized protein from Saccharomyces cerevisiae (strain ATCC 204508 / S288c) (Baker's yeast).